The primary structure comprises 369 residues: Phosphoribosyl pyrophosphate synthase-associated protein 2 (369 aa).

The residue at position 1 (Met1) is an N-acetylmethionine. Phosphoserine occurs at positions 219, 227, and 233.

It belongs to the ribose-phosphate pyrophosphokinase family. In terms of assembly, binds to PRPS1 and PRPS2.

Functionally, seems to play a negative regulatory role in 5-phosphoribose 1-diphosphate synthesis. This Bos taurus (Bovine) protein is Phosphoribosyl pyrophosphate synthase-associated protein 2 (PRPSAP2).